Reading from the N-terminus, the 348-residue chain is GPALPP motifs-containing protein 1 (348 aa).

Disordered stretches follow at residues 1–163 (MARD…AKGP) and 177–317 (QRMK…DLKV). Ala-2 carries the N-acetylalanine modification. The GPALPP motif 1 signature appears at 7–12 (GPALPP). Residues 14–27 (FKERATVEDQERDP) show a composition bias toward basic and acidic residues. Position 28 is a phosphoserine (Ser-28). The short motif at 32–37 (GPALPP) is the GPALPP motif 2 element. Low complexity predominate over residues 41–59 (SSSSDSSDSNEDSSSLSEE). Residues 60–69 (GNQESEEDDA) show a composition bias toward acidic residues. The GPALPP motif 3 signature appears at 93–98 (GPALPP). Ser-106 is subject to Phosphoserine. The span at 108–117 (PRPIIGPALP) shows a compositional bias: pro residues. The short motif at 113-118 (GPALPP) is the GPALPP motif 4 element. Phosphoserine occurs at positions 138, 143, and 148. A compositionally biased stretch (acidic residues) spans 144-154 (EEAESGEDEDI). 4 stretches are compositionally biased toward basic and acidic residues: residues 177 to 195 (QRMK…KPVT), 235 to 269 (PADR…KRLA), 277 to 287 (ESKRSESLMDI), and 295 to 317 (KAAE…DLKV). Glycyl lysine isopeptide (Lys-Gly) (interchain with G-Cter in SUMO2) cross-links involve residues Lys-279 and Lys-316.

This Rattus norvegicus (Rat) protein is GPALPP motifs-containing protein 1 (Gpalpp1).